Reading from the N-terminus, the 94-residue chain is MRTLAILAAILLVALQAQAEPLQARADEVAAAPEQIPADNPEVVVSLAWDESLAPKHPGSRKNVACYCRIPACLAGERRYGTCIYQGRLWAFCC.

A signal peptide spans 1–19 (MRTLAILAAILLVALQAQA). Residues 20 to 64 (EPLQARADEVAAAPEQIPADNPEVVVSLAWDESLAPKHPGSRKNV) constitute a propeptide that is removed on maturation. Intrachain disulfides connect cysteine 66–cysteine 94, cysteine 68–cysteine 83, and cysteine 73–cysteine 93. Residue arginine 78 is modified to ADP-ribosylarginine; by ART1. Tyrosine 85 is modified (phosphotyrosine). Arginine 88 is subject to ADP-ribosylarginine; by ART1.

The protein belongs to the alpha-defensin family. In terms of assembly, tetramer. Dimer. Interacts with RETN. In terms of processing, ADP-ribosylation drastically reduces cytotoxic and antibacterial activities, and enhances IL8 production.

It is found in the secreted. Effector molecule of the innate immune system that acts via antibiotic-like properties against a broad array of infectious agents including bacteria, fungi, and viruses or by promoting the activation and maturation of some APCs. Interacts with the essential precursor of cell wall synthesis lipid II to inhibit bacterial cell wall synthesis. Inhibits adenovirus infection via inhibition of viral disassembly at the vertex region, thereby restricting the release of internal capsid protein pVI, which is required for endosomal membrane penetration during cell entry. In addition, interaction with adenovirus capsid leads to the redirection of viral particles to TLR4 thereby promoting a NLRP3-mediated inflammasome response and interleukin 1-beta (IL-1beta) release. Induces the production of proinflammatory cytokines including type I interferon (IFN) in plasmacytoid dendritic cells (pDCs) by triggering the degradation of NFKBIA and nuclear translocation of IRF1, both of which are required for activation of pDCs. In Pan troglodytes (Chimpanzee), this protein is Neutrophil defensin 1 (DEFA1).